A 180-amino-acid polypeptide reads, in one-letter code: Large ribosomal subunit protein uL6 (180 aa).

This sequence belongs to the universal ribosomal protein uL6 family. Part of the 50S ribosomal subunit.

In terms of biological role, this protein binds to the 23S rRNA, and is important in its secondary structure. It is located near the subunit interface in the base of the L7/L12 stalk, and near the tRNA binding site of the peptidyltransferase center. The polypeptide is Large ribosomal subunit protein uL6 (Picosynechococcus sp. (strain ATCC 27264 / PCC 7002 / PR-6) (Agmenellum quadruplicatum)).